The chain runs to 167 residues: Mitochondrial inner membrane protease subunit 1 (167 aa).

Active-site residues include S40 and K83.

It belongs to the peptidase S26 family. IMP1 subfamily. As to quaternary structure, heterodimer of 2 subunits, IMMPL1 and IMMPL2.

Its subcellular location is the mitochondrion inner membrane. In terms of biological role, catalyzes the removal of transit peptides required for the targeting of proteins from the mitochondrial matrix, across the inner membrane, into the inter-membrane space. The sequence is that of Mitochondrial inner membrane protease subunit 1 (immp1l) from Xenopus tropicalis (Western clawed frog).